The following is a 443-amino-acid chain: Amino-acid acetyltransferase (443 aa).

Residues 296-436 (EQIRRATIND…KMYNYQRRSK (141 aa)) enclose the N-acetyltransferase domain.

This sequence belongs to the acetyltransferase family. ArgA subfamily. Homohexamer.

The protein localises to the cytoplasm. It carries out the reaction L-glutamate + acetyl-CoA = N-acetyl-L-glutamate + CoA + H(+). It participates in amino-acid biosynthesis; L-arginine biosynthesis; N(2)-acetyl-L-ornithine from L-glutamate: step 1/4. This chain is Amino-acid acetyltransferase, found in Salmonella arizonae (strain ATCC BAA-731 / CDC346-86 / RSK2980).